A 1219-amino-acid chain; its full sequence is A disintegrin and metalloproteinase with thrombospondin motifs 18 (1219 aa).

The N-terminal stretch at 1-47 (MECALLCLCALRAAGPGPPWGPAGLGRLAKALQLCCFCCASVAVALA) is a signal peptide. The propeptide occupies 48–284 (SDSGSSGGSG…EYGGTGRPRR (237 aa)). N-linked (GlcNAc...) asparagine glycans are attached at residues Asn-151 and Asn-190. Residues 217–248 (YPGSQRTYPGHSPSHTPPASQSQEPEYSHRRW) form a disordered region. Over residues 218–241 (PGSQRTYPGHSPSHTPPASQSQEP) the composition is skewed to polar residues. The 206-residue stretch at 293–498 (LNVETLVVAD…PQAGCLVDEP (206 aa)) folds into the Peptidase M12B domain. Cystine bridges form between Cys-369/Cys-420, Cys-395/Cys-402, Cys-414/Cys-493, Cys-453/Cys-477, Cys-521/Cys-546, Cys-532/Cys-553, Cys-541/Cys-572, Cys-566/Cys-577, Cys-601/Cys-638, Cys-605/Cys-643, and Cys-616/Cys-628. His-436 provides a ligand contact to Zn(2+). Glu-437 is an active-site residue. Residues His-440 and His-446 each contribute to the Zn(2+) site. A TSP type-1 1 domain is found at 589 to 644 (HGQWSAWSKWSECSRTCGGGVKFQERHCSNPKPQYGGKYCPGSSRIYKLCNINPCP). Asn-745, Asn-838, Asn-865, and Asn-909 each carry an N-linked (GlcNAc...) asparagine glycan. TSP type-1 domains are found at residues 931–990 (CPAY…NSHA), 991–1049 (CPPE…GRCP), 1052–1116 (NRLQ…RTCP), and 1121–1176 (AVAS…NFCP). The region spanning 1182-1219 (DDPSCVDFFSWCHLVPQHGVCNHKFYGKQCCRSCTRKS) is the PLAC domain.

Requires Zn(2+) as cofactor. The precursor is cleaved by a furin endopeptidase. In terms of processing, glycosylated. Can be O-fucosylated by POFUT2 on a serine or a threonine residue found within the consensus sequence C1-X(2)-(S/T)-C2-G of the TSP type-1 repeat domains where C1 and C2 are the first and second cysteine residue of the repeat, respectively. Fucosylated repeats can then be further glycosylated by the addition of a beta-1,3-glucose residue by the glucosyltransferase, B3GALTL. Fucosylation mediates the efficient secretion of ADAMTS family members. Can also be C-glycosylated with one or two mannose molecules on tryptophan residues within the consensus sequence W-X-X-W of the TPRs, and N-glycosylated. These other glycosylations can also facilitate secretion.

The protein resides in the secreted. It localises to the extracellular space. The protein localises to the extracellular matrix. This Mus musculus (Mouse) protein is A disintegrin and metalloproteinase with thrombospondin motifs 18 (Adamts18).